The following is a 284-amino-acid chain: Polyamine aminopropyltransferase (284 aa).

One can recognise a PABS domain in the interval 6 to 242 (KGWFTEVCKE…GWWSATLAGH (237 aa)). Q36 provides a ligand contact to S-methyl-5'-thioadenosine. Residues H67 and D91 each coordinate spermidine. S-methyl-5'-thioadenosine-binding positions include E111 and 142–143 (DG). Catalysis depends on D161, which acts as the Proton acceptor. 161–164 (DSTD) contributes to the spermidine binding site.

The protein belongs to the spermidine/spermine synthase family. In terms of assembly, homodimer or homotetramer.

The protein localises to the cytoplasm. The enzyme catalyses S-adenosyl 3-(methylsulfanyl)propylamine + putrescine = S-methyl-5'-thioadenosine + spermidine + H(+). It participates in amine and polyamine biosynthesis; spermidine biosynthesis; spermidine from putrescine: step 1/1. In terms of biological role, catalyzes the irreversible transfer of a propylamine group from the amino donor S-adenosylmethioninamine (decarboxy-AdoMet) to putrescine (1,4-diaminobutane) to yield spermidine. This Nitrosococcus oceani (strain ATCC 19707 / BCRC 17464 / JCM 30415 / NCIMB 11848 / C-107) protein is Polyamine aminopropyltransferase.